The following is a 546-amino-acid chain: MGSRNSSSAGSGSGDPSEGLPRRGAGLRRSEEEEEEDEDVDLAQVLAYLLRRGQVRLVQGGGAANLQFIQALLDSEEENDRAWDGRLGDRYNPPVDATPDTRELEFNEIKTQVELATGQLGLRRAAQKHSFPRMLHQRERGLCHRGSFSLGEQSRVISHFLPNDLGFTDSYSQKAFCGIYSKDGQIFMSACQDQTIRLYDCRYGRFRKFKSIKARDVGWSVLDVAFTPDGNHFLYSSWSDYIHICNIYGEGDTHTALDLRPDERRFAVFSIAVSSDGREVLGGANDGCLYVFDREQNRRTLQIESHEDDVNAVAFADISSQILFSGGDDAICKVWDRRTMREDDPKPVGALAGHQDGITFIDSKGDARYLISNSKDQTIKLWDIRRFSSREGMEASRQAATQQNWDYRWQQVPKKAWRKLKLPGDSSLMTYRGHGVLHTLIRCRFSPIHSTGQQFIYSGCSTGKVVVYDLLSGHIVKKLTNHKACVRDVSWHPFEEKIVSSSWDGNLRLWQYRQAEYFQDDMPESEECASAPAPVPQSSTPFSSPQ.

A compositionally biased stretch (low complexity) spans 1 to 19; sequence MGSRNSSSAGSGSGDPSEG. The interval 1–40 is disordered; sequence MGSRNSSSAGSGSGDPSEGLPRRGAGLRRSEEEEEEDEDV. Residues Leu-49 and Ser-75 each carry the phosphoserine modification. WD repeat units follow at residues 170-210, 216-258, 263-302, 305-345, 353-392, 435-480, and 481-520; these read SYSQ…RKFK, DVGW…TALD, ERRF…RTLQ, SHED…EDDP, GHQD…SREG, GVLH…KKLT, and NHKA…YFQD. The disordered stretch occupies residues 523–546; the sequence is PESEECASAPAPVPQSSTPFSSPQ. The segment covering 536–546 has biased composition (polar residues); sequence PQSSTPFSSPQ.

Interacts with DDB1 and CUL4A.

The protein operates within protein modification; protein ubiquitination. Its function is as follows. May function as a substrate receptor for CUL4-DDB1 E3 ubiquitin-protein ligase complex. This Homo sapiens (Human) protein is DDB1- and CUL4-associated factor 11 (DCAF11).